Consider the following 508-residue polypeptide: ATP synthase subunit alpha (508 aa).

ATP is bound at residue 170–177; the sequence is GDRQTGKT.

This sequence belongs to the ATPase alpha/beta chains family. In terms of assembly, F-type ATPases have 2 components, CF(1) - the catalytic core - and CF(0) - the membrane proton channel. CF(1) has five subunits: alpha(3), beta(3), gamma(1), delta(1), epsilon(1). CF(0) has three main subunits: a(1), b(2) and c(9-12). The alpha and beta chains form an alternating ring which encloses part of the gamma chain. CF(1) is attached to CF(0) by a central stalk formed by the gamma and epsilon chains, while a peripheral stalk is formed by the delta and b chains.

The protein localises to the cell inner membrane. It catalyses the reaction ATP + H2O + 4 H(+)(in) = ADP + phosphate + 5 H(+)(out). Its function is as follows. Produces ATP from ADP in the presence of a proton gradient across the membrane. The alpha chain is a regulatory subunit. This is ATP synthase subunit alpha from Dictyoglomus turgidum (strain DSM 6724 / Z-1310).